Reading from the N-terminus, the 203-residue chain is MSQLTLTLLMIVAAYLAGSVSSAVLVCRMRGLPDPRSQGSGNPGATNVLRIGGASSAAMVLFFDMLKGALPTYLAYLMGIDAISLGLIAIAACLGHIYPIFFGFKGGKGVATAFGAMAPIGDDLAICLMASWVVLVLISRYSSLAAIITALLAPLYTWWLDDRFTIPVAMLSTLIIIRHKENIQRLLKGEESKVSRKKRPKTP.

4 consecutive transmembrane segments (helical) span residues 6 to 26 (LTLL…AVLV), 82 to 102 (AISL…PIFF), 118 to 138 (APIG…LVLI), and 141 to 161 (YSSL…WWLD).

It belongs to the PlsY family. In terms of assembly, probably interacts with PlsX.

Its subcellular location is the cell inner membrane. The catalysed reaction is an acyl phosphate + sn-glycerol 3-phosphate = a 1-acyl-sn-glycero-3-phosphate + phosphate. It participates in lipid metabolism; phospholipid metabolism. Catalyzes the transfer of an acyl group from acyl-phosphate (acyl-PO(4)) to glycerol-3-phosphate (G3P) to form lysophosphatidic acid (LPA). This enzyme utilizes acyl-phosphate as fatty acyl donor, but not acyl-CoA or acyl-ACP. This Shewanella sp. (strain MR-4) protein is Glycerol-3-phosphate acyltransferase.